We begin with the raw amino-acid sequence, 249 residues long: Very-long-chain (3R)-3-hydroxyacyl-CoA dehydratase 1 (249 aa).

Positions 1 to 22 are disordered; that stretch reads MASSEEDGTNGGASEAGEEKEA. Over 1–36 the chain is Cytoplasmic; sequence MASSEEDGTNGGASEAGEEKEAPGRRRRLGLLATVW. Residues 37-56 traverse the membrane as a helical segment; the sequence is LTFYNIAMTAGWLVLAIAMV. At 57-75 the chain is on the lumenal side; the sequence is RFYMEKGTHKGLYKSIQKT. Residues 76 to 92 form a helical membrane-spanning segment; it reads LKFFQTFALLEIVHCLI. Over 93 to 102 the chain is Cytoplasmic; the sequence is GIVPTSVIVA. The chain crosses the membrane as a helical span at residues 103-120; it reads GVQVSSRIFMVWLITHSI. Over 121–126 the chain is Lumenal; the sequence is KPIQNE. The chain crosses the membrane as a helical span at residues 127 to 141; that stretch reads ESVVLFLVAWTVTEI. At 142-164 the chain is on the cytoplasmic side; sequence TRYSFYTFSLLDHLPYFIKWARY. The helical transmembrane segment at 165 to 182 threads the bilayer; the sequence is NFFIILYPVGVVGELLTI. Residues Y171 and E178 contribute to the active site. Topologically, residues 183–212 are lumenal; sequence YAALPYVKKTGMFSIRLPNKYNVSFDYYYF. N204 carries an N-linked (GlcNAc...) asparagine glycan. Residues 213-230 traverse the membrane as a helical segment; that stretch reads LLITMASYIPLFPQLYFH. Topologically, residues 231–249 are cytoplasmic; it reads MLRQRRKVLHGEVIVEKDD.

Belongs to the very long-chain fatty acids dehydratase HACD family. May interact with enzymes of the ELO family (including ELOVL1); with those enzymes that mediate condensation, the first of the four steps of the reaction cycle responsible for fatty acids elongation, may be part of a larger fatty acids elongase complex. Interacts with TECR. Skeletal muscle.

The protein resides in the endoplasmic reticulum membrane. The enzyme catalyses a very-long-chain (3R)-3-hydroxyacyl-CoA = a very-long-chain (2E)-enoyl-CoA + H2O. The catalysed reaction is (3R)-hydroxyhexadecanoyl-CoA = (2E)-hexadecenoyl-CoA + H2O. It catalyses the reaction (3R)-hydroxyoctadecanoyl-CoA = (2E)-octadecenoyl-CoA + H2O. It carries out the reaction (3R)-hydroxyeicosanoyl-CoA = (2E)-eicosenoyl-CoA + H2O. The enzyme catalyses (3R)-hydroxydocosanoyl-CoA = (2E)-docosenoyl-CoA + H2O. The catalysed reaction is (3R)-hydroxytetracosanoyl-CoA = (2E)-tetracosenoyl-CoA + H2O. It catalyses the reaction (3R)-hydroxyhexacosanoyl-CoA = (2E)-hexacosenoyl-CoA + H2O. The protein operates within lipid metabolism; fatty acid biosynthesis. Functionally, catalyzes the third of the four reactions of the long-chain fatty acids elongation cycle. This endoplasmic reticulum-bound enzymatic process, allows the addition of two carbons to the chain of long- and very long-chain fatty acids/VLCFAs per cycle. This enzyme catalyzes the dehydration of the 3-hydroxyacyl-CoA intermediate into trans-2,3-enoyl-CoA, within each cycle of fatty acid elongation. Thereby, it participates in the production of VLCFAs of different chain lengths that are involved in multiple biological processes as precursors of membrane lipids and lipid mediators. This is Very-long-chain (3R)-3-hydroxyacyl-CoA dehydratase 1 (HACD1) from Canis lupus familiaris (Dog).